A 496-amino-acid polypeptide reads, in one-letter code: MSHQHTEELNDQQIVRREKMEALTEQGIDPFGKRFERTATSGQLKEKYADKTKEELHDINETATIAGRLMTKRGKGKVGFAHLQDREGQIQIYVRKDTVGDDNYQIFKKADIGDFLGVEGEIMRTDMGELSIKATHITHLSKALRPLPEKFHGLTDVETIYRKRYLDLISNRESLERFITRSKIISEIRRYLDGLGFLEVETPVLHNEAGGAAAKPFTTHHNAQDMDMVLRIATELHLKRLIVGGMERVYEMGRIFRNEGMDATHNPEFTSIEVYQAYADFEDIMDLTEGIVQHAATAVKGDGPITYQGTEIKINEPFKRAHIVDLIKEVTGVDFWKEMTLAEAQALAQEKNVPLEKHYTSVGHIINAFFEEFVEETLIQPIFVYGHPVEVSPLAKKNADDPRFTDRFELFIMTKEYGNAFTELNDPIDQLERFKAQAAAKELGDDEATGIDYDYVEALEYGMPPTGGLGIGIDRLVMLLTDTTTIRDVLLFPTMK.

Residues Glu409 and Glu416 each coordinate Mg(2+).

The protein belongs to the class-II aminoacyl-tRNA synthetase family. In terms of assembly, homodimer. It depends on Mg(2+) as a cofactor.

It is found in the cytoplasm. It carries out the reaction tRNA(Lys) + L-lysine + ATP = L-lysyl-tRNA(Lys) + AMP + diphosphate. The sequence is that of Lysine--tRNA ligase from Streptococcus mutans serotype c (strain ATCC 700610 / UA159).